Here is a 757-residue protein sequence, read N- to C-terminus: Polyribonucleotide nucleotidyltransferase (757 aa).

Asp482 and Asp488 together coordinate Mg(2+). The 60-residue stretch at 549–608 (PRMLSFYIDKDKISAAIGSKGKNIRSVCERSNAKIEIGDDGKVSVFATSGTEAEIAKSMM) folds into the KH domain. Residues 618–686 (GSIVDVKVVR…KGGCPKLSRR (69 aa)) enclose the S1 motif domain. Positions 703-714 (EERKDGPNDRDN) are enriched in basic and acidic residues. The disordered stretch occupies residues 703 to 757 (EERKDGPNDRDNYYNNSFSRKPGGSHHKRPPRPRSGFSNRNRPKFGNNDSSSGFY). Over residues 725 to 734 (GGSHHKRPPR) the composition is skewed to basic residues.

Belongs to the polyribonucleotide nucleotidyltransferase family. Mg(2+) is required as a cofactor.

The protein resides in the cytoplasm. It catalyses the reaction RNA(n+1) + phosphate = RNA(n) + a ribonucleoside 5'-diphosphate. Functionally, involved in mRNA degradation. Catalyzes the phosphorolysis of single-stranded polyribonucleotides processively in the 3'- to 5'-direction. The sequence is that of Polyribonucleotide nucleotidyltransferase from Wolbachia sp. subsp. Drosophila simulans (strain wRi).